The sequence spans 177 residues: Prorelaxin (177 aa).

The first 25 residues, Met-1–Ala-25, serve as a signal peptide directing secretion. Disulfide bonds link Cys-34–Cys-164, Cys-46–Cys-177, and Cys-163–Cys-168. Positions Gln-63–Pro-149 are cleaved as a propeptide — connecting peptide.

Belongs to the insulin family. As to quaternary structure, heterodimer of a B chain and an A chain linked by two disulfide bonds. In terms of tissue distribution, placenta; syncytiotrophoblast.

The protein localises to the secreted. Its function is as follows. Relaxin is an ovarian hormone that acts with estrogen to produce dilatation of the birth canal in many mammals. In Canis lupus familiaris (Dog), this protein is Prorelaxin (RLN).